A 63-amino-acid polypeptide reads, in one-letter code: Large ribosomal subunit protein uL29 (63 aa).

This sequence belongs to the universal ribosomal protein uL29 family.

This chain is Large ribosomal subunit protein uL29, found in Baumannia cicadellinicola subsp. Homalodisca coagulata.